The primary structure comprises 393 residues: Phosphoglycerate kinase (393 aa).

Substrate contacts are provided by residues 21–23 (DLN), arginine 36, 59–62 (HLGR), arginine 114, and arginine 147. Residues lysine 198, glutamate 320, and 346 to 349 (GGDT) each bind ATP.

The protein belongs to the phosphoglycerate kinase family. As to quaternary structure, monomer.

It is found in the cytoplasm. The catalysed reaction is (2R)-3-phosphoglycerate + ATP = (2R)-3-phospho-glyceroyl phosphate + ADP. The protein operates within carbohydrate degradation; glycolysis; pyruvate from D-glyceraldehyde 3-phosphate: step 2/5. The polypeptide is Phosphoglycerate kinase (Methylobacillus flagellatus (strain ATCC 51484 / DSM 6875 / VKM B-1610 / KT)).